The chain runs to 352 residues: Schlafen-like protein 4 (352 aa).

Residues 87-235 are SLFN-like fold; that stretch reads FEYQSNFSEV…SDKVYQISSG (149 aa). The helical transmembrane segment at 326–343 threads the bilayer; sequence IQNIGWIFFGTALSCCIY.

Belongs to the Schlafen family. In terms of assembly, component of the PUCH (precursor of 21U RNA 5'-end cleavage holoenzyme) complex; consisting of tofu-1, tofu-2 and either slfl-3 or slfl-4.

Its subcellular location is the membrane. Component of the trimeric PUCH (precursor of 21U RNA 5'-end cleavage holoenzyme) complex, that acts as an endoribonuclease processing the 5'-end of precursor Piwi-interacting RNAs (piRNAs). The PUCH complex consists of tofu-1, tofu-2 and either slfl-3 or slfl-4, where tofu-2 exhibits endoribonuclease activity. PUCH-mediated processing strictly requires a 7-methyl-G cap (m7 G-cap) and an uracil at position three (U3). PUCH also exhibits a strict bias for piRNA precursors with an A or G at position 1. Mature piRNA production is enhanced by the interaction of PUCH with the PETISCO complex, which is stabilizing piRNA precursors and allows their processing by PUCH. The polypeptide is Schlafen-like protein 4 (Caenorhabditis elegans).